Reading from the N-terminus, the 721-residue chain is bZIP transcription factor 17 (721 aa).

2 disordered regions span residues 1 to 51 (MAEP…LMSD) and 87 to 232 (QEQF…EKKR). At 1 to 366 (MAEPITKEQP…KSEAKTKKVA (366 aa)) the chain is on the cytoplasmic side. Residues 9-25 (QPPPPAPDPNSTYPPPS) show a composition bias toward pro residues. The span at 125–141 (ESPRDSDDRCSGADHNL) shows a compositional bias: basic and acidic residues. Polar residues predominate over residues 146 to 170 (PLSSQGSGNCGSDVSEATNESSPKS). Residues 204 to 216 (DESRNSKYRRSGE) show a composition bias toward basic and acidic residues. Positions 228–288 (DEKKRARLMR…AENATLRQQL (61 aa)) constitute a bZIP domain. The basic motif stretch occupies residues 230–261 (KKRARLMRNRESAQLSRQRKKHYVEELEEKVR). The leucine-zipper stretch occupies residues 267 to 274 (ITDLNGKI). The tract at residues 337 to 359 (PRLKPQNTLGTSKAKKSESKKSE) is disordered. The chain crosses the membrane as a helical span at residues 367 to 387 (SISFLGLLFCLFLFGALAPIV). Topologically, residues 388 to 721 (NVNYGGISGA…RSGAPHLVTT (334 aa)) are lumenal. The span at 422–436 (TSRSGAGTGVSNSNG) shows a compositional bias: polar residues. The segment at 422-462 (TSRSGAGTGVSNSNGMHRGRDSDRGARKNISATESSVTPGN) is disordered. Asn450, Asn462, Asn609, and Asn617 each carry an N-linked (GlcNAc...) asparagine glycan. A compositionally biased stretch (polar residues) spans 451 to 462 (ISATESSVTPGN). The RRIL cleavage motif signature appears at 627–630 (RRIL). Asn643 and Asn651 each carry an N-linked (GlcNAc...) asparagine glycan.

The protein belongs to the bZIP family. As to quaternary structure, interacts with BZIP28.

The protein localises to the endoplasmic reticulum membrane. It localises to the golgi apparatus membrane. It is found in the nucleus. Functionally, transcriptional activator involved in salt and osmotic stress responses. Functions as a stress sensor and transducer in a signaling pathway that resembles an ER stress response. Following salt stress, BZIP17 is cleaved by SBT6.1 (S1P) and S2P at the C-terminus and the N-terminal bZIP component is translocated to the nucleus, where it activates the expression of salt stress response genes. Functions as a stress sensor and transducer in ER stress signaling pathway. ER stress induces proteolysis of BZIP17 by SBT6.1 (S1P) and S2P, and the N-terminal bZIP component is translocated to the nucleus, where it activates the expression and production of ER chaperones, as well as protein involved in brassinosteroid (BR) signaling, which is required for stress acclimation and growth. The polypeptide is bZIP transcription factor 17 (Arabidopsis thaliana (Mouse-ear cress)).